Reading from the N-terminus, the 166-residue chain is Large ribosomal subunit protein uL10 (166 aa).

Belongs to the universal ribosomal protein uL10 family. As to quaternary structure, part of the ribosomal stalk of the 50S ribosomal subunit. The N-terminus interacts with L11 and the large rRNA to form the base of the stalk. The C-terminus forms an elongated spine to which L12 dimers bind in a sequential fashion forming a multimeric L10(L12)X complex.

In terms of biological role, forms part of the ribosomal stalk, playing a central role in the interaction of the ribosome with GTP-bound translation factors. The sequence is that of Large ribosomal subunit protein uL10 from Shewanella baltica (strain OS223).